Consider the following 938-residue polypeptide: MSDYKSTLNLPETGFPMRGDLAKREPGMLARWTDDDLYGIIRAAKKGKKTFILHDGPPYANGSIHIGHSVNKILKDIIVKSKGLSGYDSPYVPGWDCHGLPIELKVEQEYGKPGEKFTAAEFRAKCREYAATQVDGQRKDFIRLGVLGDWSHPYLTMDFKTEANIIRALGKIIGNGHLHKGAKPVHWCVDCRSALAEAEVEYYDKTSPSIDVAFQAVDQDALKAKFAVSNVNGPISLVIWTTTPWTLPANRAISIAPDFDYVLVQIDGQAVILAKDLVESVMQRIGVTDYTILGTVKGAELELLRFTHPFMGFDVPAILGDHVTLDAGTGAVHTAPGHGPDDYVIGQKYGLETANPVGPDGTYLPGTYPTLDGVNVFKANDIVVALLQEKGALLHVEKMQHSYPCCWRHKTPIIFRATPQWFVSMDQKGLRAQSLKEIKGVQWIPDWGQARIESMVANRPDWCISRQRTWGVPMSLFVHKDTEELHPRTLELMEEVAKRVEVDGIQAWWDLDAKEILGDEADQYVKVPDTLDVWFDSGSTHSSVVDVRPEFAGHAADMYLEGSDQHRGWFMSSLMISTAMKGKAPYRQVLTHGFTVDGQGRKMSKSIGNTVSPQDVMNKLGADILRLWVASTDYTGEMAVSDEILKRAADSYRRIRNTARFLLANLNGFDPAKDMVKPEEMVVLDRWAVGCAKAAQEDILKAYEAYDFHEVVQRLMRFCSVEMGSFYLDIIKDRQYTAKADSVARRSCQTALYHIAEALVRWMAPILSFTADEVWGYLPGEREKYVFTGEWYEGLFGLADSEAMNDAFWDELLKVRGEVNKVIEQARADKKVGGSLEAAVTLYAEPELAAKLTALGDELRFVLLTSGATVADYNDAPADAQQSEVLKGLKVALSKAEGEKCPRCWHYTQDVGKVAEHAEICGRCVSNVAGDGEKRKFA.

Positions 58-68 match the 'HIGH' region motif; it reads PYANGSIHIGH. Lys183 bears the N6-acetyllysine mark. Glu561 contributes to the L-isoleucyl-5'-AMP binding site. Positions 602 to 606 match the 'KMSKS' region motif; the sequence is KMSKS. Lys605 contributes to the ATP binding site. 4 residues coordinate Zn(2+): Cys901, Cys904, Cys921, and Cys924.

Belongs to the class-I aminoacyl-tRNA synthetase family. IleS type 1 subfamily. Monomer. Zn(2+) serves as cofactor.

The protein resides in the cytoplasm. The catalysed reaction is tRNA(Ile) + L-isoleucine + ATP = L-isoleucyl-tRNA(Ile) + AMP + diphosphate. Catalyzes the attachment of isoleucine to tRNA(Ile). As IleRS can inadvertently accommodate and process structurally similar amino acids such as valine, to avoid such errors it has two additional distinct tRNA(Ile)-dependent editing activities. One activity is designated as 'pretransfer' editing and involves the hydrolysis of activated Val-AMP. The other activity is designated 'posttransfer' editing and involves deacylation of mischarged Val-tRNA(Ile). This Escherichia coli O7:K1 (strain IAI39 / ExPEC) protein is Isoleucine--tRNA ligase.